A 288-amino-acid polypeptide reads, in one-letter code: tRNA pseudouridine synthase A (288 aa).

The active-site Nucleophile is the Asp-59. Tyr-134 is a substrate binding site.

The protein belongs to the tRNA pseudouridine synthase TruA family. In terms of assembly, homodimer.

It catalyses the reaction uridine(38/39/40) in tRNA = pseudouridine(38/39/40) in tRNA. Its function is as follows. Formation of pseudouridine at positions 38, 39 and 40 in the anticodon stem and loop of transfer RNAs. The protein is tRNA pseudouridine synthase A of Leifsonia xyli subsp. xyli (strain CTCB07).